A 240-amino-acid chain; its full sequence is UDP-2,3-diacylglucosamine hydrolase (240 aa).

Positions 8, 10, 41, 78, and 113 each coordinate Mn(2+). 78–79 (NR) provides a ligand contact to substrate. Asp-121, Ser-159, Asn-163, Lys-166, and His-194 together coordinate substrate. 2 residues coordinate Mn(2+): His-194 and His-196.

It belongs to the LpxH family. Mn(2+) serves as cofactor.

Its subcellular location is the cell inner membrane. It carries out the reaction UDP-2-N,3-O-bis[(3R)-3-hydroxytetradecanoyl]-alpha-D-glucosamine + H2O = 2-N,3-O-bis[(3R)-3-hydroxytetradecanoyl]-alpha-D-glucosaminyl 1-phosphate + UMP + 2 H(+). Its pathway is glycolipid biosynthesis; lipid IV(A) biosynthesis; lipid IV(A) from (3R)-3-hydroxytetradecanoyl-[acyl-carrier-protein] and UDP-N-acetyl-alpha-D-glucosamine: step 4/6. Its function is as follows. Hydrolyzes the pyrophosphate bond of UDP-2,3-diacylglucosamine to yield 2,3-diacylglucosamine 1-phosphate (lipid X) and UMP by catalyzing the attack of water at the alpha-P atom. Involved in the biosynthesis of lipid A, a phosphorylated glycolipid that anchors the lipopolysaccharide to the outer membrane of the cell. The polypeptide is UDP-2,3-diacylglucosamine hydrolase (Shewanella baltica (strain OS195)).